A 252-amino-acid chain; its full sequence is Coenzyme F420:L-glutamate ligase (252 aa).

GTP-binding positions include 11–14 (MPLV), 45–46 (ET), and Lys50. Asp115 is a binding site for a divalent metal cation. GTP is bound at residue Asn118. Residues Asp156, Thr157, and Gln214 each coordinate a divalent metal cation. 212–219 (MGQADEGV) lines the GTP pocket.

Belongs to the CofE family. In terms of assembly, homodimer. The cofactor is Mg(2+). Requires Mn(2+) as cofactor. It depends on K(+) as a cofactor.

It catalyses the reaction oxidized coenzyme F420-0 + GTP + L-glutamate = oxidized coenzyme F420-1 + GDP + phosphate + H(+). The catalysed reaction is oxidized coenzyme F420-1 + GTP + L-glutamate = oxidized coenzyme F420-2 + GDP + phosphate + H(+). Its pathway is cofactor biosynthesis; coenzyme F420 biosynthesis. Its function is as follows. Catalyzes the GTP-dependent successive addition of two or more gamma-linked L-glutamates to the L-lactyl phosphodiester of 7,8-didemethyl-8-hydroxy-5-deazariboflavin (F420-0) to form coenzyme F420-0-glutamyl-glutamate (F420-2) or polyglutamated F420 derivatives. This Methanothermobacter thermautotrophicus (strain ATCC 29096 / DSM 1053 / JCM 10044 / NBRC 100330 / Delta H) (Methanobacterium thermoautotrophicum) protein is Coenzyme F420:L-glutamate ligase.